The following is a 257-amino-acid chain: Uroplakin-1a (257 aa).

At 1–13 (MASAATEGEKGSP) the chain is on the cytoplasmic side. Residues 14-34 (VVVGLLVVGNIIILLSGLALF) form a helical membrane-spanning segment. The Extracellular segment spans residues 35-58 (AETVWVTADQYRVYPLMGVSGKDD). A helical membrane pass occupies residues 59-85 (VFAGAWIAIFCGFSFFVVASFGVGAAL). At 86–90 (CRRRY) the chain is on the cytoplasmic side. The helical transmembrane segment at 91-111 (MILTYLLLMLIVYIFECASCI) threads the bilayer. Residues 112–229 (TSYTHRDYMV…HIGHAIDSYT (118 aa)) are Extracellular-facing. The N-linked (GlcNAc...) asparagine glycan is linked to Asn169. Residues 230 to 251 (WGISWFGFAILMWTLPVMLIAM) traverse the membrane as a helical segment. Topologically, residues 252 to 257 (YFYTTL) are cytoplasmic.

Belongs to the tetraspanin (TM4SF) family. Homodimer; disulfide-linked. Interacts with uroplakin-2 (UPK2). Binds to uropathogenic E.coli fimH.

The protein resides in the membrane. Component of the asymmetric unit membrane (AUM); a highly specialized biomembrane elaborated by terminally differentiated urothelial cells. May play an important role in normal bladder epithelial physiology, possibly in regulating membrane permeability of superficial umbrella cells or in stabilizing the apical membrane through AUM/cytoskeletal interactions. In Mus musculus (Mouse), this protein is Uroplakin-1a (Upk1a).